Reading from the N-terminus, the 306-residue chain is Grixazone synthase (306 aa).

Residues His39, His58, His67, His222, His226, and His248 each contribute to the Cu(2+) site.

It belongs to the tyrosinase family. Cu(2+) is required as a cofactor.

The enzyme catalyses 2 3-amino-4-hydroxybenzoate + N-acetyl-L-cysteine + 2 O2 + H(+) = grixazone B + CO2 + 4 H2O. It catalyses the reaction 2 3-amino-4-hydroxybenzaldehyde + N-acetyl-L-cysteine + 2 O2 = grixazone A + formate + 3 H2O + H(+). It carries out the reaction 4 2-aminophenol + 3 O2 = 2 2-aminophenoxazin-3-one + 6 H2O. Its activity is regulated as follows. Inhibited by 3-amino-4-hydroxybenzensulfonic acid, 4-hydroxy-3-nitrobenzaldehyde, L-tyrosine, p-hydroxybenzaldehyde. Activated by the copper chaperone GriE. Involved in the biosynthesis of the parasiticide antibiotic grixazone. Catalyzes the oxidation of 3-amino-4-hydroxybenzoate (3,4-AHBOA) to yield the corresponding quinone imine which is then non-enzymatically conjugated with the thiol group of N-acetylcysteine. The resultant compound is oxidized to its quinone imine enzymatically and is then dimerized non-enzymatically with another quinone imine oxidized by GriF to yield grixazone B. 3-amino-4-hydroxybenzaldehyde (3,4-AHBAL) can also be used as substrate to yield grixazone A. In the grixazone biosynthetic pathway, it can also function as an o-aminophenol oxidase that catalyzes the formation of the phenoxazinone chromophore from alpha-aminophenol. It can also use 2-amino-4-methylphenol, and to a lesser extent, 3,4-dihydroxybenzaldehyde, catechol and 3,4-dihydroxy-L-phenylalanine (L-DOPA) as substrates. In contrast to tyrosinases, it does not display monophenolase activity. This is Grixazone synthase from Streptomyces griseus subsp. griseus (strain JCM 4626 / CBS 651.72 / NBRC 13350 / KCC S-0626 / ISP 5235).